A 267-amino-acid chain; its full sequence is Serine acetyltransferase (267 aa).

The protein belongs to the transferase hexapeptide repeat family.

The protein resides in the cytoplasm. It catalyses the reaction L-serine + acetyl-CoA = O-acetyl-L-serine + CoA. Its pathway is amino-acid biosynthesis; L-cysteine biosynthesis; L-cysteine from L-serine: step 1/2. The chain is Serine acetyltransferase (cysE) from Haemophilus influenzae (strain ATCC 51907 / DSM 11121 / KW20 / Rd).